Here is a 101-residue protein sequence, read N- to C-terminus: Acylphosphatase (101 aa).

Residues 11 to 99 (SWLVKAIGRV…PRLNRFDRLP (89 aa)) enclose the Acylphosphatase-like domain. Active-site residues include Arg26 and Asn44.

The protein belongs to the acylphosphatase family.

It catalyses the reaction an acyl phosphate + H2O = a carboxylate + phosphate + H(+). The chain is Acylphosphatase (acyP) from Polaromonas naphthalenivorans (strain CJ2).